Here is a 132-residue protein sequence, read N- to C-terminus: Peptide methionine sulfoxide reductase MsrB (132 aa).

The 123-residue stretch at 9–131 folds into the MsrB domain; the sequence is DAQWRAELSP…NSASLSFHPK (123 aa). The Zn(2+) site is built by Cys48, Cys51, Cys97, and Cys100. Cys120 functions as the Nucleophile in the catalytic mechanism.

The protein belongs to the MsrB Met sulfoxide reductase family. The cofactor is Zn(2+).

The enzyme catalyses L-methionyl-[protein] + [thioredoxin]-disulfide + H2O = L-methionyl-(R)-S-oxide-[protein] + [thioredoxin]-dithiol. This Thiobacillus denitrificans (strain ATCC 25259 / T1) protein is Peptide methionine sulfoxide reductase MsrB.